Here is a 189-residue protein sequence, read N- to C-terminus: UPF0312 protein VC_A0539 (189 aa).

The first 22 residues, Met1–Ala22, serve as a signal peptide directing secretion.

The protein belongs to the UPF0312 family. Type 1 subfamily.

It localises to the periplasm. The polypeptide is UPF0312 protein VC_A0539 (Vibrio cholerae serotype O1 (strain ATCC 39315 / El Tor Inaba N16961)).